We begin with the raw amino-acid sequence, 570 residues long: Phosphoglucomutase 1 (570 aa).

An N-acetylserine modification is found at serine 2. Alpha-D-glucose 1,6-bisphosphate contacts are provided by arginine 24 and serine 120. The active-site Phosphoserine intermediate is serine 120. Mg(2+) is bound by residues serine 120, aspartate 291, aspartate 293, and aspartate 295. At serine 120 the chain carries Phosphoserine. Alpha-D-glucose 1,6-bisphosphate is bound by residues aspartate 295, arginine 296, threonine 360, glutamate 379, serine 381, and lysine 392.

The protein belongs to the phosphohexose mutase family. As to quaternary structure, monomer. Mg(2+) serves as cofactor.

It localises to the cytoplasm. The enzyme catalyses alpha-D-glucose 1-phosphate = alpha-D-glucose 6-phosphate. It catalyses the reaction O-phospho-L-seryl-[protein] + alpha-D-glucose 1-phosphate = alpha-D-glucose 1,6-bisphosphate + L-seryl-[protein]. The catalysed reaction is alpha-D-glucose 1,6-bisphosphate + L-seryl-[protein] = O-phospho-L-seryl-[protein] + alpha-D-glucose 6-phosphate. Minor phosphoglucomutase isozyme that catalyzes the reversible interconversion of alpha-D-glucose 1-phosphate and alpha-D-glucose 6-phosphate. The mechanism proceeds via the intermediate compound alpha-D-glucose 1,6-bisphosphate. Constitutes about 10-20% of the phosphoglucomutase activity in the cell. Key enzyme in hexose metabolism. The forward reaction is an essential step in the energy metabolism of galactose since the product of the galactose pathway enzymes in yeast is glucose 1-phosphate. The reverse reaction is an essential step for biosynthesis when carbon sources other than galactose are the energy source because glucose 1-phosphate is the starting point for the synthesis of UDP-glucose, which acts as a precursor for the synthesis of oligosaccharides and trehalose. The protein is Phosphoglucomutase 1 of Saccharomyces cerevisiae (strain ATCC 204508 / S288c) (Baker's yeast).